A 974-amino-acid polypeptide reads, in one-letter code: MAARWSSENVVVEFRDSQATAMSVDCLGQHAVLSGRRFLYIVNLDAPFEGHRKISRQSKWDIGAVQWNPHDSFAHYFAASSNQRVDLYKWKDGSGEVGTTLQGHTRVISDLDWAVFEPDLLVTSSVDTYIYIWDIKDTRKPTVALSAVAGASQVKWNKKNANCLATSHDGDVRIWDKRKPSTAVEYLAAHLSKIHGLDWHPDSEHILATSSQDNSVKFWDYRQPRKYLNILPCQVPVWKARYTPFSNGLVTVMVPQLRRENSLLLWNVFDLNTPVHTFVGHDDVVLEFQWRKQKEGSKDYQLVTWSRDQTLRMWRVDSQMQRLCANDILDGVDEFIESISLLPEPEKTLHTEDTDHQHTASHGEEEALKEDPPRNLLEERKSDQLGLPQTLQQEFSLINVQIRNVNVEMDAADRSCTVSVHCSNHRVKMLVKFPAQYPNNAAPSFQFINPTTITSTMKAKLLKILKDTALQKVKRGQSCLEPCLRQLVSCLESFVNQEDSASSNPFALPNSVTPPLPTFARVTTAYGSYQDANIPFPRTSGARFCGAGYLVYFTRPMTMHRAVSPTEPTPRSLSALSAYHTGLIAPMKIRTEAPGNLRLYSGSPTRSEKEQVSISSFYYKERKSRRWKSKREGSDSGNRQIKAAGKVIIQDIACLLPVHKSLGELYILNVNDIQETCQKNAASALLVGRKDLVQVWSLATVATDLCLGPKSDPDLETPWARHPFGRQLLESLLAHYCRLRDVQTLAMLCSVFEAQSRPQGLPNPFGPFPNRSSNLVVSHSRYPSFTSSGSCSSMSDPGLNTGGWNIAGREAEHLSSPWGESSPEELRFGSLTYSDPRERERDQHDKNKRLLDPANTQQFDDFKKCYGEILYRWGLREKRAEVLKFVSCPPDPHKGIEFGVYCSHCRSEVRGTQCAICKGFTFQCAICHVAVRGSSNFCLTCGHGGHTSHMMEWFRTQEVCPTGCGCHCLLESTF.

WD repeat units lie at residues 57–98 (QSKW…GEVG), 103–143 (GHTR…KPTV), 146–185 (SAVAGASQVKWNKKNANCLATSHDGDVRIWDKRKPSTAVE), 189–229 (AHLS…KYLN), 232–276 (PCQV…TPVH), 278–318 (FVGH…RVDS), and 319–362 (QMQR…TASH). Residues 350–374 (HTEDTDHQHTASHGEEEALKEDPPR) are disordered. The region spanning 393–494 (QEFSLINVQI…RQLVSCLESF (102 aa)) is the RWD domain. Serine 564 bears the Phosphoserine mark. The WD 8 repeat unit spans residues 668-706 (LNVNDIQETCQKNAASALLVGRKDLVQVWSLATVATDLC). 3 positions are modified to phosphoserine: serine 821, serine 822, and serine 830. The interval 831–852 (LTYSDPRERERDQHDKNKRLLD) is disordered. Over residues 835-851 (DPRERERDQHDKNKRLL) the composition is skewed to basic and acidic residues. The segment at 901–920 (YCSHCRSEVRGTQCAICKGF) adopts a C4-type zinc-finger fold. 13 residues coordinate Zn(2+): cysteine 902, cysteine 905, cysteine 914, cysteine 917, cysteine 927, cysteine 938, histidine 943, histidine 946, histidine 949, cysteine 960, cysteine 964, cysteine 966, and cysteine 968. An RING-type; atypical zinc finger spans residues 921 to 973 (TFQCAICHVAVRGSSNFCLTCGHGGHTSHMMEWFRTQEVCPTGCGCHCLLEST).

This sequence belongs to the WD repeat WDR59 family. In terms of assembly, component of the GATOR2 subcomplex, composed of MIOS, SEC13, SEH1L, WDR24 and WDR59. The GATOR2 complex interacts with CASTOR1 and CASTOR2; the interaction is negatively regulated by arginine. The GATOR2 complex interacts with SESN1, SESN2 and SESN3; the interaction is negatively regulated by amino acids. Interacts with DDB1-CUL4A/B E3 ligase complexes.

The protein localises to the lysosome membrane. Its activity is regulated as follows. The GATOR2 complex is negatively regulated by the upstream amino acid sensors CASTOR1 and SESN2, which sequester the GATOR2 complex in absence of amino acids. In the presence of abundant amino acids, GATOR2 is released from CASTOR1 and SESN2 and activated. Functionally, as a component of the GATOR2 complex, functions as an activator of the amino acid-sensing branch of the mTORC1 signaling pathway. The GATOR2 complex indirectly activates mTORC1 through the inhibition of the GATOR1 subcomplex. GATOR2 probably acts as an E3 ubiquitin-protein ligase toward GATOR1. In the presence of abundant amino acids, the GATOR2 complex mediates ubiquitination of the NPRL2 core component of the GATOR1 complex, leading to GATOR1 inactivation. In the absence of amino acids, GATOR2 is inhibited, activating the GATOR1 complex. This chain is GATOR2 complex protein WDR59, found in Homo sapiens (Human).